Reading from the N-terminus, the 311-residue chain is Probable porphobilinogen deaminase (311 aa).

S-(dipyrrolylmethanemethyl)cysteine is present on Cys237. The segment at 270–289 (SKTGDKNNPKSLGQSAGEEL) is disordered.

The protein belongs to the HMBS family. The cofactor is dipyrromethane.

It catalyses the reaction 4 porphobilinogen + H2O = hydroxymethylbilane + 4 NH4(+). It participates in porphyrin-containing compound metabolism; protoporphyrin-IX biosynthesis; coproporphyrinogen-III from 5-aminolevulinate: step 2/4. In terms of biological role, tetrapolymerization of the monopyrrole PBG into the hydroxymethylbilane pre-uroporphyrinogen in several discrete steps. This Nitrosopumilus maritimus (strain SCM1) protein is Probable porphobilinogen deaminase.